The following is a 282-amino-acid chain: NADPH-dependent 7-cyano-7-deazaguanine reductase (282 aa).

Residue 88–90 (IES) participates in substrate binding. 90–91 (SK) provides a ligand contact to NADPH. The active-site Thioimide intermediate is the cysteine 190. The active-site Proton donor is the aspartate 197. 229 to 230 (HE) contributes to the substrate binding site. 258–259 (RG) lines the NADPH pocket.

The protein belongs to the GTP cyclohydrolase I family. QueF type 2 subfamily. In terms of assembly, homodimer.

Its subcellular location is the cytoplasm. The catalysed reaction is 7-aminomethyl-7-carbaguanine + 2 NADP(+) = 7-cyano-7-deazaguanine + 2 NADPH + 3 H(+). The protein operates within tRNA modification; tRNA-queuosine biosynthesis. In terms of biological role, catalyzes the NADPH-dependent reduction of 7-cyano-7-deazaguanine (preQ0) to 7-aminomethyl-7-deazaguanine (preQ1). This is NADPH-dependent 7-cyano-7-deazaguanine reductase from Escherichia coli O9:H4 (strain HS).